The following is a 207-amino-acid chain: Glutathione S-transferase P (207 aa).

A GST N-terminal domain is found at 1–78 (PPYTITYFPV…HLGRSFGLYG (78 aa)). Position 3 is a phosphotyrosine; by EGFR (Tyr-3). Residues Tyr-7, Arg-13, Trp-38, Lys-42, and 49–50 (QL) each bind glutathione. Thr-59 carries the post-translational modification Phosphothreonine. 62–63 (QS) lines the glutathione pocket. One can recognise a GST C-terminal domain in the interval 80-201 (DQKEAALVDM…ASPEHVNRPI (122 aa)). 2 positions are modified to N6-succinyllysine: Lys-100 and Lys-113. Lys-125 carries the N6-acetyllysine modification.

This sequence belongs to the GST superfamily. Pi family. As to quaternary structure, homodimer. Interacts with CDK5.

Its subcellular location is the cytoplasm. The protein localises to the mitochondrion. The protein resides in the nucleus. The enzyme catalyses RX + glutathione = an S-substituted glutathione + a halide anion + H(+). It catalyses the reaction prostaglandin J2 + glutathione = prostaglandin J2-S-(R)-glutathione. It carries out the reaction prostaglandin J2 + glutathione = prostaglandin J2-S-(S)-glutathione. The catalysed reaction is prostaglandin A2 + glutathione = prostaglandin A2-S-(S)-glutathione. The enzyme catalyses 11(S)-hydroxy-14(S),15(S)-epoxy-(5Z,8Z,12E)-eicosatrienoate + glutathione = (11S,15S)-dihydroxy-14(R)-S-glutathionyl-(5Z,8Z,12E)-eicosatrienoate. Functionally, conjugation of reduced glutathione to a wide number of exogenous and endogenous hydrophobic electrophiles. Involved in the formation of glutathione conjugates of both prostaglandin A2 (PGA2) and prostaglandin J2 (PGJ2). Participates in the formation of novel hepoxilin regioisomers. Negatively regulates CDK5 activity via p25/p35 translocation to prevent neurodegeneration. The protein is Glutathione S-transferase P (GSTP1) of Sus scrofa (Pig).